We begin with the raw amino-acid sequence, 913 residues long: SGGFDFSFLPQPPQEKAGVGLGPGPMGLMGPRGPPGASGAPGPQGFQGPAGEPGEPGQTGPAGARGPAGPPGKAGPGKPGRPGERGVVGPQGARGFPGTPGLPGFKGIRGGQTGARGLPGERGRVGAPGPAGARGSDGSVGPVGPAGPIGSAGPPGFPGAPGPKGELGPVGNTGPGPAGPRGEQGLPGVSGPVGPPGNPGANGLTGAKGAAGLPGVAGAPGLPGPRGIPGPVGASGATGARGLVGEPGPAGSKGESGGKGEPGSAGPQGPPGSSGEEGKRGPNGGSTGPTGPPGLRGGPGSRGLPGADGRAGVIGPAGARGASGPAGVRGPSGDTGRPGEPGLMGARGLPGSPGNVGPAGKEGPAGLPGIDGRPGPIGPAGARGEAGNIGFPGPKGPAGDPGKGAPGPDGNNGAQGPPGLQGVQGGKGTTGEAGKPGERGPGEFGLPGPAGPRGERGPPGESGAVGPSGAIGSRGPSGPPGPDGNKGEPGVVGAPGTAGPAGSGGPGERGAAGIPGGKGEKGETGLRGEVGTTGRDGARGAPGAVGAPGPAGATGDRGEAGAAGPAGPAGPRGSPGERGEVGPAGPNGFAGPAGAAGQPGAKGERGTKGPKGENGIVGPTGPVGSAGPAGPNGPAGPAGSRGDGGPPGVTGFPGAAGRTGPPGPSGITGPPGPPGAAGKEGLRGPRGDQGPVGRTGETGAGGPPGFTGEKGPSGEPGTAGPPGTAGPQGLLGAPGILGLPGSRGERGLPGVAGAVGEPGPLGIGPPGARGPSGAGKHGNRGEPGPVGSVGPVGALGPRGPSGPQGIRGDKGEPGEKGPRGLPGLGLPGLAGQHGDQGPGPVGPAGPRGPAGPSGPPGKDGRTGHPGAVGPAGIRGSQGSQGPSGPPGPPGPPGPPGASGGGYDFGYEGDFYRA.

Residues 1–913 (SGGFDFSFLP…FGYEGDFYRA (913 aa)) form a disordered region. Pro-10, Pro-13, Pro-35, and Pro-41 each carry 4-hydroxyproline. Low complexity-rich tracts occupy residues 28-67 (LMGP…ARGP), 125-154 (VGAP…SAGP), and 199-220 (PGAN…AGAP). Positions 254 to 263 (GESGGKGEPG) are enriched in gly residues. Residues 264-274 (SAGPQGPPGSS) are compositionally biased toward low complexity. A compositionally biased stretch (gly residues) spans 281–303 (GPNGGSTGPTGPPGLRGGPGSRG). Residues 316-332 (PAGARGASGPAGVRGPS) are compositionally biased toward low complexity. Residues Pro-338 and Pro-341 each carry the 4-hydroxyproline modification. Composition is skewed to low complexity over residues 367–386 (LPGI…RGEA) and 408–421 (PDGN…PGLQ). Gly residues predominate over residues 422-431 (GVQGGKGTTG). Low complexity-rich tracts occupy residues 459 to 476 (PGES…SRGP) and 488 to 498 (EPGVVGAPGTA). The span at 499 to 517 (GPAGSGGPGERGAAGIPGG) shows a compositional bias: gly residues. Composition is skewed to low complexity over residues 527–574 (RGEV…PRGS) and 581–601 (VGPA…QPGA). Over residues 602 to 611 (KGERGTKGPK) the composition is skewed to basic and acidic residues. A compositionally biased stretch (low complexity) spans 619–629 (PTGPVGSAGPA). Gly residues predominate over residues 639 to 648 (GSRGDGGPPG). The span at 650-659 (TGFPGAAGRT) shows a compositional bias: low complexity. Positions 696 to 705 (GETGAGGPPG) are enriched in gly residues. Low complexity-rich tracts occupy residues 713–740 (SGEP…LGLP) and 748–758 (LPGVAGAVGEP). Positions 759 to 776 (GPLGIGPPGARGPSGAGK) are enriched in gly residues. Residues 782–797 (EPGPVGSVGPVGALGP) show a composition bias toward low complexity. The span at 807–818 (RGDKGEPGEKGP) shows a compositional bias: basic and acidic residues. Over residues 883–895 (SGPPGPPGPPGPP) the composition is skewed to pro residues.

Belongs to the fibrillar collagen family. As to quaternary structure, trimers of one alpha 2(I) and two alpha 1(I) chains. Interacts (via C-terminus) with TMEM131 (via PapD-L domain); the interaction is direct and is involved in assembly and TRAPPIII ER-to-Golgi transport complex-dependent secretion of collagen. Prolines at the third position of the tripeptide repeating unit (G-X-Y) are hydroxylated in some or all of the chains. As to expression, expressed in bones.

It is found in the secreted. The protein resides in the extracellular space. The protein localises to the extracellular matrix. Functionally, type I collagen is a member of group I collagen (fibrillar forming collagen). This chain is Collagen alpha-2(I) chain, found in Parocnus serus (Greater Haitian ground sloth).